A 629-amino-acid chain; its full sequence is tRNA uridine 5-carboxymethylaminomethyl modification enzyme MnmG (629 aa).

Residues 13–18, V125, and S180 each bind FAD; that span reads GGGHAG. 273–287 provides a ligand contact to NAD(+); it reads GPRYCPSIEDKVMRF. FAD is bound at residue Q370.

It belongs to the MnmG family. As to quaternary structure, homodimer. Heterotetramer of two MnmE and two MnmG subunits. FAD is required as a cofactor.

It localises to the cytoplasm. In terms of biological role, NAD-binding protein involved in the addition of a carboxymethylaminomethyl (cmnm) group at the wobble position (U34) of certain tRNAs, forming tRNA-cmnm(5)s(2)U34. This chain is tRNA uridine 5-carboxymethylaminomethyl modification enzyme MnmG, found in Shigella dysenteriae serotype 1 (strain Sd197).